The chain runs to 1506 residues: Transient receptor potential cation channel subfamily M member 2 (1506 aa).

Residues 1–11 (MESLDRRRTGS) are compositionally biased toward basic and acidic residues. The segment at 1-22 (MESLDRRRTGSEQEEGFGVQSR) is disordered. Residues 1-750 (MESLDRRRTG…WWGQLCVDNG (750 aa)) are Cytoplasmic-facing. T173, N178, R301, G332, and T335 together coordinate ADP-D-ribose. Residue T738 is modified to Phosphothreonine. The stretch at 751–767 (LWRIILCMLAFPLLFTG) is an intramembrane region. Over 768-792 (FISFREKRLQALCRPARVRAFFNAP) the chain is Cytoplasmic. Residues 793 to 813 (VVIFHMNILSYFAFLCLFAYV) form a helical membrane-spanning segment. The Extracellular segment spans residues 814–824 (LMVDFQPSPSW). A helical membrane pass occupies residues 825–845 (CEYLIYLWLFSLVCEETRQLF). The Ca(2+) site is built by E840 and Q843. At 846 to 864 (YDPDGCGLMKMASLYFSDF) the chain is on the cytoplasmic side. A helical transmembrane segment spans residues 865 to 885 (WNKLDVGAILLFIVGLTCRLI). N866 contacts Ca(2+). Over 886 to 893 (PATLYPGR) the chain is Extracellular. A helical membrane pass occupies residues 894-914 (IILSLDFIMFCLRLMHIFTIS). The Cytoplasmic segment spans residues 915–926 (KTLGPKIIIVKR). A helical transmembrane segment spans residues 927-947 (MMKDVFFFLFLLAVWVVSFGV). The Extracellular portion of the chain corresponds to 948–967 (AKQAILIHNESRVDWIFRGV). An intramembrane region (pore-forming) is located at residues 968 to 982 (VYHSYLTIFGQIPTY). Residues 976–979 (FGQI) carry the Selectivity filter motif. The Extracellular portion of the chain corresponds to 983 to 1019 (IDGVNFSMDQCSPNGTDPYKPKCPESDWTGQAPAFPE). A disulfide bond links C993 and C1005. Residues 1020 to 1041 (WLTVTLLCLYLLFANILLLNLL) form a helical membrane-spanning segment. At 1042–1076 (IAMFNYTFQEVQEHTDQIWKFQRHDLIEEYHGRPP) the chain is on the cytoplasmic side. A Ca(2+)-binding site is contributed by E1070. An intramembrane segment occupies 1077–1095 (APPPLILLSHLQLLIKRIV). Over 1096-1506 (LKIPAKRHKQ…KVASLFGAHF (411 aa)) the chain is Cytoplasmic. The Nudix hydrolase domain maps to 1350–1501 (RWKRNQGGAI…KTILQKVASL (152 aa)). S1378 contacts ADP-D-ribose. The Nudix box motif lies at 1386–1407 (GSREPGEMLPRKLKRVLRQEFW). ADP-D-ribose-binding residues include D1427, R1429, Y1488, and N1490.

It belongs to the transient receptor (TC 1.A.4) family. LTrpC subfamily. TRPM2 sub-subfamily. As to quaternary structure, homotetramer. Protein kinase C (PKC)-mediated phosphorylation of TRPM2 at Thr-738 counteracts the effect of cytosolic Ca(2+) and elevates the temperature threshold. In terms of tissue distribution, detected in the preoptic area of the hypothalamus, a brain area involved in body temperature control. Detected in beta-cells in pancreas islets (at protein level). Detected in brain cortex, striatum, hippocampus CA1, CA2 and CA3 layers, and in the Purkinje cell layer in cerebellum. Widely expressed, with highest levels in lung, spleen, eye and brain. Detected in dendritic cells and in polymorphonuclear neutrophils.

Its subcellular location is the cell membrane. The protein localises to the perikaryon. It is found in the cell projection. The protein resides in the cytoplasmic vesicle. It localises to the lysosome. It catalyses the reaction Ca(2+)(in) = Ca(2+)(out). The enzyme catalyses Na(+)(in) = Na(+)(out). Activated by intracellular ADP-ribose, beta-NAD (NAD(+)) and similar compounds, and by oxidative stress caused by reactive oxygen or nitrogen species. Ca(2+) and PI(4,5)P2 are required for channel opening by ADP-ribose. Activated by moderate heat (35 to 40 degrees Celsius). Activation by ADP-ribose and beta-NAD is strongly increased by moderate heat (35 to 40 degrees Celsius). Likewise, reactive oxygen species lower the threshold for activation by moderate heat (37 degrees Celsius). Inactivated by exposure to extracellular pH between 4.0 and 6.5; irreversibly inactivated when open channels are exposed to extracellular pH between 4.0 and 6.5, while pre-exposure of closed channels to extracellular pH 5.5 gives rise to currents that rapidly inactivate, but protects against irreversible inactivation. Inactivated by intracellular ATP. Activated by arachidonic acid. Inhibited by 2-aminoethyl diphenylborinate (2-APB). Nonselective, voltage-independent cation channel that mediates Na(+) and Ca(2+) influx, leading to increased cytoplasmic Ca(2+) levels. Functions as a ligand-gated ion channel, gated by intracellular adenosine diphosphate ribose (ADP-ribose), Ca(2+), warm temperature, and oxidative stress. The precise physiological activators are under debate; the true, physiological activators may be ADP-ribose and ADP-ribose-2'-phosphate. Binding of ADP-ribose to the cytoplasmic Nudix domain causes a conformation change; the channel is primed but still requires Ca(2+) binding to trigger channel opening. Extracellular Ca(2+) passes through the channel and increases channel activity. Also contributes to Ca(2+) release from intracellular stores in response to ADP-ribose. Plays a role in numerous processes that involve signaling via intracellular Ca(2+) levels. Besides, mediates the release of lysosomal Zn(2+) stores in response to reactive oxygen species, leading to increased cytosolic Zn(2+) levels. Plays a role in mediating behavorial and physiological responses to moderate heat and thereby contributes to body temperature homeostasis. Plays a role in insulin secretion, a process that requires increased cytoplasmic Ca(2+) levels. Required for normal IFNG and cytokine secretion and normal innate immune immunity in response to bacterial infection. Required for normal phagocytosis and cytokine release by macrophages exposed to zymosan (in vitro). Plays a role in dendritic cell differentiation and maturation, and in dendritic cell chemotaxis via its role in regulating cytoplasmic Ca(2+) levels. Plays a role in the regulation of the reorganization of the actin cytoskeleton and filopodia formation in response to reactive oxygen species via its function in increasing cytoplasmic Ca(2+) and Zn(2+) levels. Confers susceptibility to cell death following oxidative stress. In Mus musculus (Mouse), this protein is Transient receptor potential cation channel subfamily M member 2 (Trpm2).